Here is a 340-residue protein sequence, read N- to C-terminus: Lipoyl synthase (340 aa).

Residues C83, C88, C94, C109, C113, C116, and S323 each coordinate [4Fe-4S] cluster. The Radical SAM core domain maps to F95–K312.

Belongs to the radical SAM superfamily. Lipoyl synthase family. The cofactor is [4Fe-4S] cluster.

Its subcellular location is the cytoplasm. It catalyses the reaction [[Fe-S] cluster scaffold protein carrying a second [4Fe-4S](2+) cluster] + N(6)-octanoyl-L-lysyl-[protein] + 2 oxidized [2Fe-2S]-[ferredoxin] + 2 S-adenosyl-L-methionine + 4 H(+) = [[Fe-S] cluster scaffold protein] + N(6)-[(R)-dihydrolipoyl]-L-lysyl-[protein] + 4 Fe(3+) + 2 hydrogen sulfide + 2 5'-deoxyadenosine + 2 L-methionine + 2 reduced [2Fe-2S]-[ferredoxin]. The protein operates within protein modification; protein lipoylation via endogenous pathway; protein N(6)-(lipoyl)lysine from octanoyl-[acyl-carrier-protein]: step 2/2. Functionally, catalyzes the radical-mediated insertion of two sulfur atoms into the C-6 and C-8 positions of the octanoyl moiety bound to the lipoyl domains of lipoate-dependent enzymes, thereby converting the octanoylated domains into lipoylated derivatives. The polypeptide is Lipoyl synthase (Pseudomonas fluorescens (strain Pf0-1)).